The chain runs to 83 residues: MAELGEADEAELQRLVAAEQQKAQFTAQVHHFMELCWDKCVEKPGNRLDSRTENCLSSCVDRFIDTTLAITSRFAQIVQRGGQ.

Ala2 carries the N-acetylalanine modification. The Twin CX3C motif signature appears at 36 to 59; the sequence is CWDKCVEKPGNRLDSRTENCLSSC. Intrachain disulfides connect Cys36-Cys59 and Cys40-Cys55.

Belongs to the small Tim family. Heterohexamer; possibly composed of 3 copies of TIMM8B and 3 copies of TIMM13, named soluble 70 kDa complex. Associates with the TIM22 complex, whose core is composed of TIMM22.

Its subcellular location is the mitochondrion inner membrane. Functionally, probable mitochondrial intermembrane chaperone that participates in the import and insertion of some multi-pass transmembrane proteins into the mitochondrial inner membrane. Also required for the transfer of beta-barrel precursors from the TOM complex to the sorting and assembly machinery (SAM complex) of the outer membrane. Acts as a chaperone-like protein that protects the hydrophobic precursors from aggregation and guide them through the mitochondrial intermembrane space. This is Mitochondrial import inner membrane translocase subunit Tim8 B (TIMM8B) from Bos taurus (Bovine).